The chain runs to 94 residues: Cystatin-A1 (94 aa).

The Secondary area of contact signature appears at 45–49; that stretch reads QLVAG.

The protein belongs to the cystatin family.

The protein localises to the cytoplasm. Intracellular thiol proteinase inhibitor. Inhibits papain, but not cathepsin B. This chain is Cystatin-A1 (cpiA), found in Dictyostelium discoideum (Social amoeba).